The chain runs to 234 residues: Protein-toxin resistance protein KTD1 (234 aa).

Residues 1–47 lie on the Cytoplasmic side of the membrane; that stretch reads MQTPSENTDVKMDTLDEPSAHLIEENVALPEDTFSSHLSYVLYEIAH. The helical transmembrane segment at 48–68 threads the bilayer; that stretch reads CKPIMFMIIIIVSLISLIVLF. Residues 68 to 75 are required for resistance to killer toxin K28, a protein-toxin encoded by the M28 virus; the sequence is FHDNDGCT. Residues 69 to 76 lie on the Extracellular side of the membrane; sequence HDNDGCTV. A helical membrane pass occupies residues 77–97; sequence ILVMSLIVASMALMVVAAFTF. The Cytoplasmic segment spans residues 98–234; sequence GKAITEQEFM…RKQYPDADLP (137 aa). The tract at residues 147–234 is required for resistance to killer toxin K28, a protein-toxin encoded by the M28 virus; that stretch reads FYSGKKCHEF…RKQYPDADLP (88 aa). A disordered region spans residues 168 to 187; the sequence is SHSDSSSNSAEDTQSPVSAG. Polar residues predominate over residues 177–187; sequence AEDTQSPVSAG. A Glycyl lysine isopeptide (Lys-Gly) (interchain with G-Cter in ubiquitin) cross-link involves residue lysine 217.

The protein belongs to the DUP/COS family.

Its subcellular location is the vacuole membrane. The protein localises to the golgi apparatus. The protein resides in the trans-Golgi network membrane. It is found in the endosome membrane. Confers resistance to killer toxin K28, a protein-toxin encoded by the M28 virus that uses S.cerevisiae as a host. Probably acts against K28 after endocytosis of the protein-toxin. This chain is Protein-toxin resistance protein KTD1, found in Saccharomyces cerevisiae (strain ATCC 204508 / S288c) (Baker's yeast).